Reading from the N-terminus, the 649-residue chain is Probable ADP-ribosylation factor GTPase-activating protein AGD14 (649 aa).

One can recognise an Arf-GAP domain in the interval 12-130 (EKIIRGLMKL…KYAGANDADK (119 aa)). A C4-type zinc finger spans residues 27-50 (CINCNSLGPQYVCTTFWTFVCMAC). 4 disordered regions span residues 124–159 (GAND…QSPP), 209–279 (FSNE…VRSV), 294–316 (LGEA…SNHV), and 366–391 (FTPA…SAPK). Residues 127 to 146 (DADKPSKDSQDHVSSEDMTR) show a composition bias toward basic and acidic residues. Residues 150–159 (SYHSYSQSPP) are compositionally biased toward low complexity. 4 stretches are compositionally biased toward polar residues: residues 248–257 (PQFQHSNAPP), 269–279 (RTTSSGSVRSV), 300–315 (ESRQ…TSNH), and 366–385 (FTPA…SRPS).

Its function is as follows. GTPase-activating protein (GAP) for ADP ribosylation factor (ARF). The sequence is that of Probable ADP-ribosylation factor GTPase-activating protein AGD14 (AGD14) from Arabidopsis thaliana (Mouse-ear cress).